Here is an 82-residue protein sequence, read N- to C-terminus: Large ribosomal subunit protein bL27 (82 aa).

Residues 1–21 (MAHKKGASSSRNGRDSNAKRL) form a disordered region.

This sequence belongs to the bacterial ribosomal protein bL27 family.

In Tropheryma whipplei (strain TW08/27) (Whipple's bacillus), this protein is Large ribosomal subunit protein bL27.